We begin with the raw amino-acid sequence, 59 residues long: Large ribosomal subunit protein bL32 (59 aa).

Positions 1–16 (MAVPKRKVSPHRRGNR) are enriched in basic residues. Residues 1 to 20 (MAVPKRKVSPHRRGNRRAHD) form a disordered region.

This sequence belongs to the bacterial ribosomal protein bL32 family.

The protein is Large ribosomal subunit protein bL32 of Erythrobacter litoralis (strain HTCC2594).